Here is a 430-residue protein sequence, read N- to C-terminus: Bifunctional protein GlmU (430 aa).

The pyrophosphorylase stretch occupies residues 1–223 (MSISVVILAA…EEEFKGVNSK (223 aa)). Residues 8–11 (LAAG), Lys-22, and 81–82 (GT) contribute to the UDP-N-acetyl-alpha-D-glucosamine site. Asp-102 contributes to the Mg(2+) binding site. Residues Gly-135, Glu-149, Asn-164, and Asn-221 each contribute to the UDP-N-acetyl-alpha-D-glucosamine site. Asn-221 is a binding site for Mg(2+). Residues 224–244 (LDLARAEEIMQRRIKEALMMA) form a linker region. Positions 245–430 (GVTMCLPETI…NFFYKFFGDK (186 aa)) are N-acetyltransferase. 2 residues coordinate UDP-N-acetyl-alpha-D-glucosamine: Arg-308 and Lys-325. Catalysis depends on His-336, which acts as the Proton acceptor. The UDP-N-acetyl-alpha-D-glucosamine site is built by Tyr-339 and Asn-350. Acetyl-CoA is bound by residues Ala-353, 359 to 360 (NY), Ser-378, Ala-396, and Arg-413.

In the N-terminal section; belongs to the N-acetylglucosamine-1-phosphate uridyltransferase family. The protein in the C-terminal section; belongs to the transferase hexapeptide repeat family. In terms of assembly, homotrimer. Mg(2+) serves as cofactor.

It localises to the cytoplasm. It carries out the reaction alpha-D-glucosamine 1-phosphate + acetyl-CoA = N-acetyl-alpha-D-glucosamine 1-phosphate + CoA + H(+). The enzyme catalyses N-acetyl-alpha-D-glucosamine 1-phosphate + UTP + H(+) = UDP-N-acetyl-alpha-D-glucosamine + diphosphate. It participates in nucleotide-sugar biosynthesis; UDP-N-acetyl-alpha-D-glucosamine biosynthesis; N-acetyl-alpha-D-glucosamine 1-phosphate from alpha-D-glucosamine 6-phosphate (route II): step 2/2. It functions in the pathway nucleotide-sugar biosynthesis; UDP-N-acetyl-alpha-D-glucosamine biosynthesis; UDP-N-acetyl-alpha-D-glucosamine from N-acetyl-alpha-D-glucosamine 1-phosphate: step 1/1. The protein operates within bacterial outer membrane biogenesis; LPS lipid A biosynthesis. Functionally, catalyzes the last two sequential reactions in the de novo biosynthetic pathway for UDP-N-acetylglucosamine (UDP-GlcNAc). The C-terminal domain catalyzes the transfer of acetyl group from acetyl coenzyme A to glucosamine-1-phosphate (GlcN-1-P) to produce N-acetylglucosamine-1-phosphate (GlcNAc-1-P), which is converted into UDP-GlcNAc by the transfer of uridine 5-monophosphate (from uridine 5-triphosphate), a reaction catalyzed by the N-terminal domain. The chain is Bifunctional protein GlmU from Sulfurovum sp. (strain NBC37-1).